Consider the following 609-residue polypeptide: Glutamine--fructose-6-phosphate aminotransferase [isomerizing] (609 aa).

C2 serves as the catalytic Nucleophile; for GATase activity. Residues 2–218 (CGIVGAIAQR…EGDIAEITRR (217 aa)) form the Glutamine amidotransferase type-2 domain. SIS domains lie at 286-426 (ADEL…LKGL) and 458-599 (LAED…VDQP). K604 (for Fru-6P isomerization activity) is an active-site residue.

Homodimer. In pull-down experiments interacts with CedA.

The protein localises to the cytoplasm. The enzyme catalyses D-fructose 6-phosphate + L-glutamine = D-glucosamine 6-phosphate + L-glutamate. In terms of biological role, catalyzes the first step in hexosamine metabolism, converting fructose-6P into glucosamine-6P using glutamine as a nitrogen source. This chain is Glutamine--fructose-6-phosphate aminotransferase [isomerizing] (glmS), found in Escherichia coli (strain K12).